The following is a 105-amino-acid chain: Large ribosomal subunit protein eL33 (105 aa).

Belongs to the eukaryotic ribosomal protein eL33 family.

The protein was found to bind to both initiator and elongator tRNAs and consequently was assigned to the P site or P and A site. In Dictyostelium discoideum (Social amoeba), this protein is Large ribosomal subunit protein eL33 (rpl35a).